We begin with the raw amino-acid sequence, 538 residues long: Phospho-2-dehydro-3-deoxyheptonate aldolase 1, chloroplastic (538 aa).

The transit peptide at 1–74 (MALSSTSTTN…KPSKSSPPAA (74 aa)) directs the protein to the chloroplast. A disordered region spans residues 55–82 (DSNKIPIVSDKPSKSSPPAATATTAPAP). A compositionally biased stretch (low complexity) spans 68 to 82 (KSSPPAATATTAPAP). The residue at position 75 (Thr-75) is a Blocked amino end (Thr).

The protein belongs to the class-II DAHP synthase family.

The protein localises to the plastid. It localises to the chloroplast. It carries out the reaction D-erythrose 4-phosphate + phosphoenolpyruvate + H2O = 7-phospho-2-dehydro-3-deoxy-D-arabino-heptonate + phosphate. The protein operates within metabolic intermediate biosynthesis; chorismate biosynthesis; chorismate from D-erythrose 4-phosphate and phosphoenolpyruvate: step 1/7. Activation by tryptophan (a hysteretic factor). This chain is Phospho-2-dehydro-3-deoxyheptonate aldolase 1, chloroplastic (SHKA), found in Solanum tuberosum (Potato).